Consider the following 144-residue polypeptide: Transcription antitermination protein NusB (144 aa).

It belongs to the NusB family.

Its function is as follows. Involved in transcription antitermination. Required for transcription of ribosomal RNA (rRNA) genes. Binds specifically to the boxA antiterminator sequence of the ribosomal RNA (rrn) operons. The sequence is that of Transcription antitermination protein NusB from Haemophilus influenzae (strain PittEE).